Consider the following 675-residue polypeptide: Secretogranin-1 (675 aa).

An N-terminal signal peptide occupies residues 1-20; that stretch reads MQRAMLLGLLGAAALAAVIS. A disulfide bond links C36 and C57. The segment covering 64-90 has biased composition (basic and acidic residues); it reads SGKEVKGEEKGENENSKFEVRLLRDPS. 2 disordered regions span residues 64-507 and 528-555; these read SGKE…YPTT and NSDFEKKGNPDDSFLDDDGEDGNGVTMT. S93, S99, S100, S129, and S147 each carry phosphoserine. S93 is a glycosylation site (O-linked (Xyl...) (chondroitin sulfate) serine). Composition is skewed to basic and acidic residues over residues 148 to 161 and 168 to 248; these read KEAKIRHSEERGGK and GKIY…KPQE. S190 is modified (phosphoserine). S236 carries an O-linked (Xyl...) (chondroitin sulfate) serine glycan. The segment covering 250–269 has biased composition (acidic residues); the sequence is PDQDQSEEESEEGEEGEEGA. A phosphoserine mark is found at S255, S259, S291, S309, and S333. Residues 292–311 are compositionally biased toward basic and acidic residues; the sequence is YEGRRPLSEERKHAAGESKD. Sulfotyrosine is present on Y339. Basic and acidic residues-rich tracts occupy residues 361–410 and 429–452; these read GSEE…EGAK and SRQEKRLLDEGHDPVHESPVDTAK. S362, S372, S375, and S397 each carry phosphoserine. Y469 bears the Sulfotyrosine mark. Phosphoserine is present on residues S490, S529, and S540. Y563 bears the Sulfotyrosine mark. The tract at residues 620-646 is disordered; the sequence is DFYDSEEQMGPHQEAEDEKDRADQRVL. Y622 bears the Sulfotyrosine; partial mark. S624 is modified (phosphoserine). The segment covering 637–646 has biased composition (basic and acidic residues); it reads EKDRADQRVL. An Arginine amide; in CCB peptide short form modification is found at R674.

This sequence belongs to the chromogranin/secretogranin protein family. In terms of assembly, interacts with ITPR1 in the secretory granules. Post-translationally, extensively processed in glucagonoma tissue by limited proteolysis at conserved basic residues. Alternative processing are seen in different tissues. The proglucagon-converting enzymes present in transformed alpha-cells are likely candidates to be involved in tissue-specific processing. In terms of tissue distribution, expressed in the brain, adrenal medulla and anterior pituitary. In the brain, localized to the hippocampal formation, the endocrine hypothalamus, the olfactory system, and in anatomically distinct structures in the pons-medulla.

The protein resides in the secreted. Functionally, secretogranin-1 is a neuroendocrine secretory granule protein, which may be the precursor for other biologically active peptides. This is Secretogranin-1 (Chgb) from Rattus norvegicus (Rat).